The primary structure comprises 269 residues: Ribonuclease HII (269 aa).

An RNase H type-2 domain is found at 61 to 250 (RLVCGVDEAG…VRKMLSPGLE (190 aa)). 3 residues coordinate a divalent metal cation: Asp-67, Glu-68, and Asp-158.

Belongs to the RNase HII family. The cofactor is Mn(2+). It depends on Mg(2+) as a cofactor.

The protein localises to the cytoplasm. The enzyme catalyses Endonucleolytic cleavage to 5'-phosphomonoester.. Its function is as follows. Endonuclease that specifically degrades the RNA of RNA-DNA hybrids. This is Ribonuclease HII from Parvibaculum lavamentivorans (strain DS-1 / DSM 13023 / NCIMB 13966).